Reading from the N-terminus, the 185-residue chain is Ribosome-recycling factor (185 aa).

Belongs to the RRF family.

It localises to the cytoplasm. Responsible for the release of ribosomes from messenger RNA at the termination of protein biosynthesis. May increase the efficiency of translation by recycling ribosomes from one round of translation to another. The sequence is that of Ribosome-recycling factor from Mannheimia succiniciproducens (strain KCTC 0769BP / MBEL55E).